The chain runs to 464 residues: Serine--tRNA synthetase-like protein Slimp (464 aa).

The protein belongs to the class-II aminoacyl-tRNA synthetase family. Type-1 seryl-tRNA synthetase subfamily.

It localises to the mitochondrion. Its function is as follows. Essential protein which may play a role in mitochondrial morphogenesis and function. Has transfer RNA (tRNA)-binding activity and can bind tRNA(Ser) but does not have serine--tRNA ligase activity and does not bind ATP. The chain is Serine--tRNA synthetase-like protein Slimp from Drosophila melanogaster (Fruit fly).